We begin with the raw amino-acid sequence, 248 residues long: Small ribosomal subunit protein uS2 (248 aa).

The protein belongs to the universal ribosomal protein uS2 family.

This chain is Small ribosomal subunit protein uS2, found in Leptothrix cholodnii (strain ATCC 51168 / LMG 8142 / SP-6) (Leptothrix discophora (strain SP-6)).